The sequence spans 61 residues: Large ribosomal subunit protein bL28 (61 aa).

It belongs to the bacterial ribosomal protein bL28 family.

The chain is Large ribosomal subunit protein bL28 from Geobacillus sp. (strain WCH70).